The primary structure comprises 347 residues: Ceramide very long chain fatty acid hydroxylase scs7 (347 aa).

Residues 1–156 (MASVTSEKCV…GNFLEPLTKT (156 aa)) lie on the Cytoplasmic side of the membrane. A helical membrane pass occupies residues 157–177 (PWYMIPLIWVPCVTYGFLYAC). A topological domain (lumenal) is located at residue Thr-178. Residues 179 to 199 (GIPFSVAITFFIIGLFTWTLV) traverse the membrane as a helical segment. Topologically, residues 200-238 (EYTMHRFLFHLDEYTPDHPIFLTMHFAFHGCHHFLPADK) are cytoplasmic. His-204, His-209, His-228, His-231, and His-232 together coordinate Zn(2+). The helical transmembrane segment at 239-259 (YRLVMPPALFLIFATPWYHFI) threads the bilayer. Gln-260 is a topological domain (lumenal). Residues 261-281 (LVLPHYIGVAGFSGAILGYVF) traverse the membrane as a helical segment. Residues 282–347 (YDLTHYFLHH…EQGKISTKAK (66 aa)) are Cytoplasmic-facing. His-286, His-290, His-306, His-309, and His-310 together coordinate Zn(2+).

The protein belongs to the sterol desaturase family. SCS7 subfamily. Requires Zn(2+) as cofactor.

Its subcellular location is the endoplasmic reticulum membrane. It participates in sphingolipid metabolism. Functionally, ceramide hydroxylase involved in the hydroxylation of sphingolipid-associated very long chain fatty acids. Postulated to hydroxylate the very long chain fatty acid of dihydroceramides and phytoceramides at C-2. The protein is Ceramide very long chain fatty acid hydroxylase scs7 of Schizosaccharomyces pombe (strain 972 / ATCC 24843) (Fission yeast).